Consider the following 820-residue polypeptide: Mitogen-activated protein kinase kinase kinase kinase 2 (820 aa).

The Protein kinase domain occupies 16 to 273; it reads FELLQRVGAG…AEKLLQHPFT (258 aa). ATP-binding positions include 22–30 and K45; that span reads VGAGTYGDV. D136 acts as the Proton acceptor in catalysis. The PEST1 stretch occupies residues 294 to 314; that stretch reads LGTPSPEDCELETYDMFPDTI. S328 carries the post-translational modification Phosphoserine. The PEST2 stretch occupies residues 344–360; it reads ETDPLNEPWEEEWTLLG. Residues 387-442 form a disordered region; it reads SEFQELDSPDDTMGTIKRAPFLGPLPTDPPAEEPLSSPPGTLPPPPSGPNSSPLLP. S394 is modified (phosphoserine). Residues 405 to 448 form a PEST3 region; the sequence is APFLGPLPTDPPAEEPLSSPPGTLPPPPSGPNSSPLLPTAWATM. Residues 422–434 are compositionally biased toward pro residues; sequence SSPPGTLPPPPSG. Residues 482 to 793 enclose the CNH domain; it reads PLRIHAAVTW…IFRVLGAHRD (312 aa).

The protein belongs to the protein kinase superfamily. STE Ser/Thr protein kinase family. STE20 subfamily. Interacts with TRAF2, TRAF6, MAP3K1/MEKK1 and MAP3K11/MLK3. Interacts with RAB8A. Mg(2+) is required as a cofactor. In terms of processing, polyubiquitinated through 'Lys-48'-polyubiquitin chains, allowing proteasomal turnover. Ubiquitination requires the kinase activity of MAP4K2/GCK. Autophosphorylated in response to tumor necrosis factor (TNF), endotoxins or pro-inflammatory stimuli. Autophosphorylation leads to activation. In terms of tissue distribution, highly expressed in germinal center but not mantle zone B-cells. Also expressed in lung, brain and placenta and at lower levels in other tissues examined.

The protein localises to the cytoplasm. The protein resides in the basolateral cell membrane. It localises to the golgi apparatus membrane. The enzyme catalyses L-seryl-[protein] + ATP = O-phospho-L-seryl-[protein] + ADP + H(+). It catalyses the reaction L-threonyl-[protein] + ATP = O-phospho-L-threonyl-[protein] + ADP + H(+). Its activity is regulated as follows. The tumor necrosis factor (TNF), as well as endotoxins and pro-inflammatory stimuli such as polyinosine-polycytidine (poly(IC)), lipopolysaccharides (LPS), peptidoglycan (PGN), flagellin, or lipid A activate MAP4K2 by promoting its autophosphorylation. Functionally, serine/threonine-protein kinase which acts as an essential component of the MAP kinase signal transduction pathway. Acts as a MAPK kinase kinase kinase (MAP4K) and is an upstream activator of the stress-activated protein kinase/c-Jun N-terminal kinase (SAP/JNK) signaling pathway and to a lesser extent of the p38 MAPKs signaling pathway. Required for the efficient activation of JNKs by TRAF6-dependent stimuli, including pathogen-associated molecular patterns (PAMPs) such as polyinosine-polycytidine (poly(IC)), lipopolysaccharides (LPS), lipid A, peptidoglycan (PGN), or bacterial flagellin. To a lesser degree, IL-1 and engagement of CD40 also stimulate MAP4K2-mediated JNKs activation. The requirement for MAP4K2/GCK is most pronounced for LPS signaling, and extends to LPS stimulation of c-Jun phosphorylation and induction of IL-8. Enhances MAP3K1 oligomerization, which may relieve N-terminal mediated MAP3K1 autoinhibition and lead to activation following autophosphorylation. Also mediates the SAP/JNK signaling pathway and the p38 MAPKs signaling pathway through activation of the MAP3Ks MAP3K10/MLK2 and MAP3K11/MLK3. May play a role in the regulation of vesicle targeting or fusion. regulation of vesicle targeting or fusion. Activator of the Hippo signaling pathway which plays a pivotal role in organ size control and tumor suppression by restricting proliferation and promoting apoptosis. MAP4Ks act in parallel to and are partially redundant with STK3/MST2 and STK4/MST2 in the phosphorylation and activation of LATS1/2, and establish MAP4Ks as components of the expanded Hippo pathway. The protein is Mitogen-activated protein kinase kinase kinase kinase 2 of Homo sapiens (Human).